The chain runs to 425 residues: Serine hydroxymethyltransferase 2 (425 aa).

(6S)-5,6,7,8-tetrahydrofolate contacts are provided by residues L121 and 125–127 (GHL). At K230 the chain carries N6-(pyridoxal phosphate)lysine.

The protein belongs to the SHMT family. In terms of assembly, homodimer. Pyridoxal 5'-phosphate serves as cofactor.

The protein resides in the cytoplasm. It catalyses the reaction (6R)-5,10-methylene-5,6,7,8-tetrahydrofolate + glycine + H2O = (6S)-5,6,7,8-tetrahydrofolate + L-serine. It participates in one-carbon metabolism; tetrahydrofolate interconversion. The protein operates within amino-acid biosynthesis; glycine biosynthesis; glycine from L-serine: step 1/1. Functionally, catalyzes the reversible interconversion of serine and glycine with tetrahydrofolate (THF) serving as the one-carbon carrier. This reaction serves as the major source of one-carbon groups required for the biosynthesis of purines, thymidylate, methionine, and other important biomolecules. Also exhibits THF-independent aldolase activity toward beta-hydroxyamino acids, producing glycine and aldehydes, via a retro-aldol mechanism. This Mycobacterium bovis (strain ATCC BAA-935 / AF2122/97) protein is Serine hydroxymethyltransferase 2.